Consider the following 294-residue polypeptide: ATP synthase gamma chain (294 aa).

Belongs to the ATPase gamma chain family. As to quaternary structure, F-type ATPases have 2 components, CF(1) - the catalytic core - and CF(0) - the membrane proton channel. CF(1) has five subunits: alpha(3), beta(3), gamma(1), delta(1), epsilon(1). CF(0) has three main subunits: a, b and c.

Its subcellular location is the cell inner membrane. In terms of biological role, produces ATP from ADP in the presence of a proton gradient across the membrane. The gamma chain is believed to be important in regulating ATPase activity and the flow of protons through the CF(0) complex. The sequence is that of ATP synthase gamma chain from Rhizobium rhizogenes (strain K84 / ATCC BAA-868) (Agrobacterium radiobacter).